The primary structure comprises 344 residues: Methionine import ATP-binding protein MetN (344 aa).

Positions 2–241 (IELQGLSQRF…PQHEVTRAMI (240 aa)) constitute an ABC transporter domain. 38-45 (GRSGAGKS) lines the ATP pocket.

Belongs to the ABC transporter superfamily. Methionine importer (TC 3.A.1.24) family. The complex is composed of two ATP-binding proteins (MetN), two transmembrane proteins (MetI) and a solute-binding protein (MetQ).

It localises to the cell inner membrane. The catalysed reaction is L-methionine(out) + ATP + H2O = L-methionine(in) + ADP + phosphate + H(+). It carries out the reaction D-methionine(out) + ATP + H2O = D-methionine(in) + ADP + phosphate + H(+). Functionally, part of the ABC transporter complex MetNIQ involved in methionine import. Responsible for energy coupling to the transport system. The sequence is that of Methionine import ATP-binding protein MetN from Cupriavidus pinatubonensis (strain JMP 134 / LMG 1197) (Cupriavidus necator (strain JMP 134)).